Consider the following 398-residue polypeptide: Phytoene synthase, chloroplastic (398 aa).

This sequence belongs to the phytoene/squalene synthase family. As to quaternary structure, monomer.

It localises to the plastid. The protein resides in the chloroplast. The catalysed reaction is 2 (2E,6E,10E)-geranylgeranyl diphosphate = 15-cis-phytoene + 2 diphosphate. It participates in carotenoid biosynthesis; phytoene biosynthesis; all-trans-phytoene from geranylgeranyl diphosphate: step 1/1. Its function is as follows. Catalyzes the reaction from prephytoene diphosphate to phytoene. This chain is Phytoene synthase, chloroplastic (PSY), found in Daucus carota (Wild carrot).